A 408-amino-acid polypeptide reads, in one-letter code: Broad specificity amino-acid racemase (408 aa).

The signal sequence occupies residues 1–21 (MHKKTLLATLILGLLAGQAVA). The cysteines at positions 70 and 96 are disulfide-linked. K74 serves as the catalytic Proton acceptor. K74 is subject to N6-(pyridoxal phosphate)lysine. R173 contacts substrate. Y300 (proton acceptor) is an active-site residue. Position 348 (M348) interacts with substrate.

The protein belongs to the alanine racemase family. Bsr subfamily. In terms of assembly, homodimer. Requires pyridoxal 5'-phosphate as cofactor.

Its subcellular location is the periplasm. It catalyses the reaction an L-alpha-amino acid = a D-alpha-amino acid. The catalysed reaction is L-lysine = D-lysine. The enzyme catalyses L-arginine = D-arginine. It carries out the reaction L-alanine = D-alanine. It catalyses the reaction L-serine = D-serine. The catalysed reaction is L-methionine = D-methionine. The enzyme catalyses L-leucine = D-leucine. It carries out the reaction L-cysteine = D-cysteine. It catalyses the reaction L-glutamine = D-glutamine. The catalysed reaction is L-asparagine = D-asparagine. The enzyme catalyses L-histidine = D-histidine. Amino-acid racemase able to utilize a broad range of substrates. Reversibly racemizes ten of the 19 natural chiral amino acids known, including both non-beta-branched aliphatic amino acids (Ala, Leu, Met, Ser, Cys, Gln and Asn) and positively charged amino acids (His, Lys and Arg). Is not active on negatively charged (Glu and Asp) or aromatic (Tyr, Trp and Phe) amino acids and displays minimal activity towards beta-branched aliphatic (Ile, Val and Thr) substrates. Enables bacteria to produce and release extracellular non-canonical D-amino acids (NCDAAs) that regulate diverse cellular processes. The polypeptide is Broad specificity amino-acid racemase (Aeromonas hydrophila subsp. hydrophila (strain ATCC 7966 / DSM 30187 / BCRC 13018 / CCUG 14551 / JCM 1027 / KCTC 2358 / NCIMB 9240 / NCTC 8049)).